A 200-amino-acid chain; its full sequence is Recombination protein RecR (200 aa).

The C4-type zinc-finger motif lies at 60–75 (CVYCQALTEDDVCNIC). The 95-residue stretch at 83–177 (TKLCIIESML…KISRIGFGVP (95 aa)) folds into the Toprim domain.

This sequence belongs to the RecR family.

Its function is as follows. May play a role in DNA repair. It seems to be involved in an RecBC-independent recombinational process of DNA repair. It may act with RecF and RecO. The sequence is that of Recombination protein RecR from Francisella tularensis subsp. tularensis (strain SCHU S4 / Schu 4).